A 262-amino-acid chain; its full sequence is Apolipoprotein A-I-1 (262 aa).

Residues 1–18 (MKFLALALTILLAAGTQA) form the signal peptide. A 3 X approximate tandem repeats region spans residues 32–63 (VKAALSMYIAQVKLTAQRSIDLLDDTEYKEYK). 2 tandem repeats follow at residues 64-85 (MQLTQSLDNLQQYADATSQSLA) and 87-107 (YSEAFGTQLTDATAAVRAEVM). Residues 64 to 262 (MQLTQSLDNL…YETISQAMKA (199 aa)) are 10 X approximate tandem repeats. The 3; half-length repeat unit spans residues 108-118 (KDVEELRSQLE). 5 repeat units span residues 119 to 140 (PKRAELKEVLDKHIDEYRKKLE), 141 to 162 (PLIKEHIELRRTEMEAFRAKME), 163 to 184 (PIVEELRAKVAINVEETKTKLM), 185 to 206 (PIVEIVRAKLTERLEELRTLAA), and 207 to 228 (PYAEEYKEQMIKAVGEVREKVS). The 9; half-length repeat unit spans residues 229–239 (PLSEDFKGQVG). Repeat unit 10 spans residues 240–262 (PAAEQAKQKLLAFYETISQAMKA).

Belongs to the apolipoprotein A1/A4/E family.

It localises to the secreted. In terms of biological role, participates in the reverse transport of cholesterol from tissues to the liver for excretion by promoting cholesterol efflux from tissues and by acting as a cofactor for the lecithin cholesterol acyltransferase (LCAT). The sequence is that of Apolipoprotein A-I-1 from Oncorhynchus mykiss (Rainbow trout).